The primary structure comprises 575 residues: DNA mismatch repair protein MutL (575 aa).

It belongs to the DNA mismatch repair MutL/HexB family.

Functionally, this protein is involved in the repair of mismatches in DNA. It is required for dam-dependent methyl-directed DNA mismatch repair. May act as a 'molecular matchmaker', a protein that promotes the formation of a stable complex between two or more DNA-binding proteins in an ATP-dependent manner without itself being part of a final effector complex. This is DNA mismatch repair protein MutL from Coxiella burnetii (strain CbuG_Q212) (Coxiella burnetii (strain Q212)).